The following is a 134-amino-acid chain: Transmembrane protein 100 (134 aa).

The disordered stretch occupies residues 1-23 (MTEESTKENLGAPKSPTPVTMEK). A Phosphoserine modification is found at Ser-15. Transmembrane regions (helical) follow at residues 56–76 (CIIP…AVAY) and 84–104 (IISI…ASSA). Ser-121 carries the phosphoserine modification.

Interacts (via C-terminus) with TRPA1 and TRPV1. Interacts with TASOR. Expressed in dorsal root ganglia. Expressed in neurons as well as nerve fiber bundles connecting ganglia and fibers innervating muscle layer of the gastric body, jejunum, and proximal colon. Expressed in arterial endothelial cells and neurons of the central nervous system and peripheral nervous system (at protein level). Expressed strongly in lung, weakly in brain, heart and muscle. Expressed in enteric neurons and vascular tissue in the muscularis propria of the gastrointestinal tract.

It is found in the cell membrane. The protein resides in the membrane. The protein localises to the perikaryon. Its subcellular location is the cytoplasm. It localises to the perinuclear region. It is found in the endoplasmic reticulum. Plays a role during embryonic arterial endothelium differentiation and vascular morphogenesis through the ACVRL1 receptor-dependent signaling pathway upon stimulation by bone morphogenetic proteins, such as GDF2/BMP9 and BMP10. Involved in the regulation of nociception, acting as a modulator of the interaction between TRPA1 and TRPV1, two molecular sensors and mediators of pain signals in dorsal root ganglia (DRG) neurons. Mechanistically, it weakens their interaction, thereby releasing the inhibition of TRPA1 by TRPV1 and increasing the single-channel open probability of the TRPA1-TRPV1 complex. The chain is Transmembrane protein 100 (Tmem100) from Mus musculus (Mouse).